Reading from the N-terminus, the 435-residue chain is Protein deadpan (435 aa).

Positions glycine 18–glycine 27 are enriched in low complexity. A disordered region spans residues glycine 18–methionine 48. A bHLH domain is found at leucine 40–valine 97. In terms of domain architecture, Orange spans phenylalanine 116–leucine 149. Disordered regions lie at residues glutamine 305–proline 334 and serine 349–serine 416. A compositionally biased stretch (low complexity) spans serine 311 to serine 324. 2 stretches are compositionally biased toward polar residues: residues serine 355–cysteine 378 and leucine 385–glycine 395. 3 positions are modified to phosphoserine: serine 407, serine 408, and serine 411. Residues tryptophan 432–tryptophan 435 carry the WRPW motif motif.

In terms of assembly, homodimer. Heterodimer with E(spl)mgamma-HLH and E(spl). Transcription repression requires formation of a complex with the corepressor protein Groucho. Interacts (via bHLH motif) with sisA. Interacts with da.

The protein localises to the nucleus. Its function is as follows. Transcriptional repressor of genes that require a bHLH protein for their transcription. In the larval brain, required to maintain the self-renewal and identity of type II neuroblasts by regulating the expression of the transcriptional repressor erm together with other self-renewal transcriptional repressors such as klu and E(spl)mgamma-HLH. As part of its role in neuroblasts development, has been shown to be a direct target of the Notch signaling pathway, however might work also independently of N/Notch. In the developing larval and pupal brain, required for mushroom body differentiation. Involved in sex determination and SXL transcription repression when in complex with the corepressor protein Groucho. The chain is Protein deadpan (dpn) from Drosophila melanogaster (Fruit fly).